Here is a 136-residue protein sequence, read N- to C-terminus: Protein NrdI (136 aa).

Belongs to the NrdI family.

Functionally, probably involved in ribonucleotide reductase function. The sequence is that of Protein NrdI from Erwinia tasmaniensis (strain DSM 17950 / CFBP 7177 / CIP 109463 / NCPPB 4357 / Et1/99).